Consider the following 466-residue polypeptide: Asparagine--tRNA ligase (466 aa).

The protein belongs to the class-II aminoacyl-tRNA synthetase family. Homodimer.

The protein localises to the cytoplasm. The catalysed reaction is tRNA(Asn) + L-asparagine + ATP = L-asparaginyl-tRNA(Asn) + AMP + diphosphate + H(+). The chain is Asparagine--tRNA ligase from Shewanella sp. (strain ANA-3).